Reading from the N-terminus, the 265-residue chain is Phosphonates import ATP-binding protein PhnC 1 (265 aa).

The region spanning 7–252 is the ABC transporter domain; the sequence is IEVSNLSKSF…KLNEIYGTAA (246 aa). 39–46 is an ATP binding site; the sequence is GASGSGKS.

It belongs to the ABC transporter superfamily. Phosphonates importer (TC 3.A.1.9.1) family. The complex is composed of two ATP-binding proteins (PhnC), two transmembrane proteins (PhnE) and a solute-binding protein (PhnD).

Its subcellular location is the cell inner membrane. It carries out the reaction phosphonate(out) + ATP + H2O = phosphonate(in) + ADP + phosphate + H(+). Functionally, part of the ABC transporter complex PhnCDE involved in phosphonates import. Responsible for energy coupling to the transport system. This is Phosphonates import ATP-binding protein PhnC 1 from Nostoc sp. (strain PCC 7120 / SAG 25.82 / UTEX 2576).